Reading from the N-terminus, the 443-residue chain is 5-methylthioadenosine/S-adenosylhomocysteine deaminase 1 (443 aa).

Residues H69 and H71 each contribute to the Zn(2+) site. Substrate-binding residues include E98 and H191. Zn(2+) is bound at residue H218. Substrate contacts are provided by E221 and D306. D306 lines the Zn(2+) pocket.

This sequence belongs to the metallo-dependent hydrolases superfamily. MTA/SAH deaminase family. Requires Zn(2+) as cofactor.

The catalysed reaction is S-adenosyl-L-homocysteine + H2O + H(+) = S-inosyl-L-homocysteine + NH4(+). The enzyme catalyses S-methyl-5'-thioadenosine + H2O + H(+) = S-methyl-5'-thioinosine + NH4(+). In terms of biological role, catalyzes the deamination of 5-methylthioadenosine and S-adenosyl-L-homocysteine into 5-methylthioinosine and S-inosyl-L-homocysteine, respectively. Is also able to deaminate adenosine. The polypeptide is 5-methylthioadenosine/S-adenosylhomocysteine deaminase 1 (Syntrophus aciditrophicus (strain SB)).